The primary structure comprises 203 residues: ATP-dependent Clp protease proteolytic subunit (203 aa).

Ser-100 acts as the Nucleophile in catalysis. Residue His-125 is part of the active site.

It belongs to the peptidase S14 family. In terms of assembly, fourteen ClpP subunits assemble into 2 heptameric rings which stack back to back to give a disk-like structure with a central cavity, resembling the structure of eukaryotic proteasomes.

It localises to the cytoplasm. The catalysed reaction is Hydrolysis of proteins to small peptides in the presence of ATP and magnesium. alpha-casein is the usual test substrate. In the absence of ATP, only oligopeptides shorter than five residues are hydrolyzed (such as succinyl-Leu-Tyr-|-NHMec, and Leu-Tyr-Leu-|-Tyr-Trp, in which cleavage of the -Tyr-|-Leu- and -Tyr-|-Trp bonds also occurs).. Its function is as follows. Cleaves peptides in various proteins in a process that requires ATP hydrolysis. Has a chymotrypsin-like activity. Plays a major role in the degradation of misfolded proteins. The chain is ATP-dependent Clp protease proteolytic subunit from Anaeromyxobacter dehalogenans (strain 2CP-1 / ATCC BAA-258).